Reading from the N-terminus, the 1321-residue chain is MAAAAASGAGGAAGAGTGGAGPAGRLLPPPAPGSPAAPAAVSPAAGQPRPPAPASRGPMPARIGYYEIDRTIGKGNFAVVKRATHLVTKAKVAIKIIDKTQLDEENLKKIFREVQIMKMLCHPHIIRLYQVMETERMIYLVTEYASGGEIFDHLVAHGRMAEKEARRKFKQIVTAVYFCHCRNIVHRDLKAENLLLDANLNIKIADFGFSNLFTPGQLLKTWCGSPPYAAPELFEGKEYDGPKVDIWSLGVVLYVLVCGALPFDGSTLQNLRARVLSGKFRIPFFMSTECEHLIRHMLVLDPNKRLSMEQICKHKWMKLGDADPNFDRLIAECQQLKEERQVDPLNEDVLLAMEDMGLDKEQTLQSLRSDAYDHYSAIYSLLCDRHKRHKTLRLGALPSMPRALAFQAPVNIQAEQAGTAMNISVPQVQLINPENQIVEPDGTLNLDSDEGEEPSPEALVRYLSMRRHTVGVADPRTEVMEDLQKLLPGFPGVNPQAPFLQVAPNVNFMHNLLPMQNLQPTGQLEYKEQSLLQPPTLQLLNGMGPLGRRASDGGANIQLHAQQLLKRPRGPSPLVTMTPAVPAVTPVDEESSDGEPDQEAVQSSTYKDSNTLHLPTERFSPVRRFSDGAASIQAFKAHLEKMGNNSSIKQLQQECEQLQKMYGGQIDERTLEKTQQQHMLYQQEQHHQILQQQIQDSICPPQPSPPLQAACENQPALLTHQLQRLRIQPSSPPPNHPNNHLFRQPSNSPPPMSSAMIQPHGAASSSQFQGLPSRSAIFQQQPENCSSPPNVALTCLGMQQPAQSQQVTIQVQEPVDMLSNMPGTAAGSSGRGISISPSAGQMQMQHRTNLMATLSYGHRPLSKQLSADSAEAHSLNVNRFSPANYDQAHLHPHLFSDQSRGSPSSYSPSTGVGFSPTQALKVPPLDQFPTFPPSAHQQPPHYTTSALQQALLSPTPPDYTRHQQVPHILQGLLSPRHSLTGHSDIRLPPTEFAQLIKRQQQQRQQQQQQQQQQEYQELFRHMNQGDAGSLAPSLGGQSMTERQALSYQNADSYHHHTSPQHLLQIRAQECVSQASSPTPPHGYAHQPALMHSESMEEDCSCEGAKDGFQDSKSSSTLTKGCHDSPLLLSTGGPGDPESLLGTVSHAQELGIHPYGHQPTAAFSKNKVPSREPVIGNCMDRSSPGQAVELPDHNGLGYPARPSVHEHHRPRALQRHHTIQNSDDAYVQLDNLPGMSLVAGKALSSARMSDAVLSQSSLMGSQQFQDGENEECGASLGGHEHPDLSDGSQHLNSSCYPSTCITDILLSYKHPEVSFSMEQAGV.

The segment at 1 to 59 (MAAAAASGAGGAAGAGTGGAGPAGRLLPPPAPGSPAAPAAVSPAAGQPRPPAPASRGPM) is disordered. Positions 8 to 22 (GAGGAAGAGTGGAGP) are enriched in gly residues. Over residues 36-47 (AAPAAVSPAAGQ) the composition is skewed to low complexity. The Protein kinase domain occupies 66-317 (YEIDRTIGKG…MEQICKHKWM (252 aa)). The residue at position 71 (T71) is a Phosphothreonine. ATP-binding positions include 72–80 (IGKGNFAVV) and K95. E113 is modified (phosphothreonine). The active-site Proton acceptor is the D188. T221 is subject to Phosphothreonine; by LKB1. Residues 344 to 384 (PLNEDVLLAMEDMGLDKEQTLQSLRSDAYDHYSAIYSLLCD) enclose the UBA domain. A Phosphothreonine modification is found at T469. 3 positions are modified to phosphoserine: S551, S591, and S592. Residues 585–614 (TPVDEESSDGEPDQEAVQSSTYKDSNTLHL) form a disordered region. The segment covering 587–598 (VDEESSDGEPDQ) has biased composition (acidic residues). A compositionally biased stretch (polar residues) spans 600 to 613 (AVQSSTYKDSNTLH). Phosphoserine is present on residues S626 and S647. The tract at residues 727 to 772 (IQPSSPPPNHPNNHLFRQPSNSPPPMSSAMIQPHGAASSSQFQGLP) is disordered. Positions 763–772 (ASSSQFQGLP) are enriched in polar residues. A Phosphoserine modification is found at S866. The disordered stretch occupies residues 894-945 (LFSDQSRGSPSSYSPSTGVGFSPTQALKVPPLDQFPTFPPSAHQQPPHYTTS). The span at 896 to 909 (SDQSRGSPSSYSPS) shows a compositional bias: low complexity. Residues 935–945 (AHQQPPHYTTS) show a composition bias toward polar residues. Residue S978 is modified to Phosphoserine. R986 is subject to Omega-N-methylarginine. A compositionally biased stretch (polar residues) spans 1256-1265 (SLMGSQQFQD). The tract at residues 1256-1289 (SLMGSQQFQDGENEECGASLGGHEHPDLSDGSQH) is disordered.

Belongs to the protein kinase superfamily. CAMK Ser/Thr protein kinase family. SNF1 subfamily. In terms of assembly, binds to and is activated by YWHAZ when phosphorylated on Thr-221. Interacts with 14-3-3 proteins. Interacts with HDAC4; this interaction leads to HDAC4 retention in the cytoplasm. Interacts with DEPTOR, MLST8/GbetaL, RICTOR and RPTOR. Requires Mg(2+) as cofactor. In terms of processing, phosphorylated at Thr-221 by STK11/LKB1 in complex with STE20-related adapter-alpha (STRADA) pseudo kinase and CAB39. Phosphorylation at Thr-221 is inhibited in response to PTHLH/PTHrP. Phosphorylated at Thr-469 and Ser-551 in response to cAMP signaling. In terms of tissue distribution, expressed in chondrocytes.

It is found in the cytoplasm. It catalyses the reaction L-seryl-[protein] + ATP = O-phospho-L-seryl-[protein] + ADP + H(+). The catalysed reaction is L-threonyl-[protein] + ATP = O-phospho-L-threonyl-[protein] + ADP + H(+). Activated by phosphorylation on Thr-221. Functionally, positive regulator of mTOR signaling that functions by triggering the degradation of DEPTOR, an mTOR inhibitor. Involved in the dynamic regulation of mTOR signaling in chondrocyte differentiation during skeletogenesis. Negatively regulates cAMP signaling pathway possibly by acting on CRTC2/TORC2 and CRTC3/TORC3. Prevents HDAC4 translocation to the nucleus. The chain is Serine/threonine-protein kinase SIK3 from Homo sapiens (Human).